Here is a 1192-residue protein sequence, read N- to C-terminus: Chromosome partition protein Smc (1192 aa).

31–38 contacts ATP; that stretch reads PNGSGKSN. 4 coiled-coil regions span residues 164 to 197, 234 to 292, 333 to 369, and 396 to 464; these read AGIS…VDEV, LTLS…RSEL, SAIA…RDVE, and EHEA…DAKV. One can recognise an SMC hinge domain in the interval 522–636; that stretch reads KDLVGIVADC…LVDTLATAIG (115 aa). Coiled coils occupy residues 676-736, 772-902, and 986-1030; these read RSEL…AKLH, ELAV…EREA, and GSVN…INAD.

This sequence belongs to the SMC family. As to quaternary structure, homodimer.

It is found in the cytoplasm. Functionally, required for chromosome condensation and partitioning. The polypeptide is Chromosome partition protein Smc (Rhodopirellula baltica (strain DSM 10527 / NCIMB 13988 / SH1)).